Reading from the N-terminus, the 280-residue chain is Putative pyruvate, phosphate dikinase regulatory protein (280 aa).

An ADP-binding site is contributed by 154 to 161 (GVSRTSKT).

The protein belongs to the pyruvate, phosphate/water dikinase regulatory protein family. PDRP subfamily.

The enzyme catalyses N(tele)-phospho-L-histidyl/L-threonyl-[pyruvate, phosphate dikinase] + ADP = N(tele)-phospho-L-histidyl/O-phospho-L-threonyl-[pyruvate, phosphate dikinase] + AMP + H(+). It carries out the reaction N(tele)-phospho-L-histidyl/O-phospho-L-threonyl-[pyruvate, phosphate dikinase] + phosphate + H(+) = N(tele)-phospho-L-histidyl/L-threonyl-[pyruvate, phosphate dikinase] + diphosphate. In terms of biological role, bifunctional serine/threonine kinase and phosphorylase involved in the regulation of the pyruvate, phosphate dikinase (PPDK) by catalyzing its phosphorylation/dephosphorylation. This Nitrobacter winogradskyi (strain ATCC 25391 / DSM 10237 / CIP 104748 / NCIMB 11846 / Nb-255) protein is Putative pyruvate, phosphate dikinase regulatory protein.